The following is a 163-amino-acid chain: Nucleotide-binding protein PMI0103 (163 aa).

This sequence belongs to the YajQ family.

In terms of biological role, nucleotide-binding protein. This is Nucleotide-binding protein PMI0103 from Proteus mirabilis (strain HI4320).